The primary structure comprises 20 residues: Phospholipase A2 homolog P-elapitoxin-Aa1a gamma chain (20 aa).

Belongs to the phospholipase A2 family. Group I subfamily. As to quaternary structure, heterotrimer of alpha, beta and gamma chains, each related to PLA2. In terms of processing, glycosylated. As to expression, expressed by the venom gland.

It is found in the secreted. In terms of biological role, heterotrimer: Snake venom phospholipase A2 (PLA2) that has presynaptic neurotoxicity. Inhibits nerve-evoked twitch contractions but not responses to cholinergic agonists acetylcholine and carbachol and to depolarizing agonist KCl. Causes a fade in tetanic contractions. Displays a triphasic mode of action with depression, enhancement and blockade of neurotransmission. Does not display myotoxic activity such as changes in baseline muscle tension or inhibition of directly stimulated muscle twitches. All subunits are necessary for maximum toxicity. Its function is as follows. Monomer: the gamma chain has no significant enzymatic activity and is not toxic by itself. This is Phospholipase A2 homolog P-elapitoxin-Aa1a gamma chain from Acanthophis antarcticus (Common death adder).